We begin with the raw amino-acid sequence, 179 residues long: Bifunctional protein PyrR (179 aa).

Residues Val-100 to Thr-112 carry the PRPP-binding motif.

It belongs to the purine/pyrimidine phosphoribosyltransferase family. PyrR subfamily.

The enzyme catalyses UMP + diphosphate = 5-phospho-alpha-D-ribose 1-diphosphate + uracil. Its function is as follows. Regulates the transcription of the pyrimidine nucleotide (pyr) operon in response to exogenous pyrimidines. Functionally, also displays a weak uracil phosphoribosyltransferase activity which is not physiologically significant. The polypeptide is Bifunctional protein PyrR (Haemophilus influenzae (strain 86-028NP)).